The sequence spans 1829 residues: Protein TIC 214 (1829 aa).

The next 6 helical transmembrane spans lie at 18–38 (IINSVVVVGLYYGFMTTFSIG), 67–87 (FIAGQLMMFISIYYAPLHLAL), 90–110 (PHTITVLALPYLLFHFFWNNP), 127–147 (LSIQCVFLNNLIFQLFNHFLL), 174–194 (FVGWLIGHILFMKWVGLVLVW), and 224–244 (IFSILLFITCIYYLGRIPSPI). The span at 260-272 (RDVEIEKTFERGG) shows a compositional bias: basic and acidic residues. The disordered stretch occupies residues 260–301 (RDVEIEKTFERGGTKQGQEVSAEEDPSPSLFSEEKEDPDKIE).

It belongs to the TIC214 family. In terms of assembly, part of the Tic complex.

The protein resides in the plastid. It is found in the chloroplast inner membrane. Its function is as follows. Involved in protein precursor import into chloroplasts. May be part of an intermediate translocation complex acting as a protein-conducting channel at the inner envelope. The sequence is that of Protein TIC 214 from Citrus sinensis (Sweet orange).